We begin with the raw amino-acid sequence, 480 residues long: Cobyric acid synthase (480 aa).

The region spanning 249 to 436 (KLKVVVPVLT…LHGFLDSEAA (188 aa)) is the GATase cobBQ-type domain. C330 (nucleophile) is an active-site residue. Residue H428 is part of the active site.

The protein belongs to the CobB/CobQ family. CobQ subfamily.

It functions in the pathway cofactor biosynthesis; adenosylcobalamin biosynthesis. Functionally, catalyzes amidations at positions B, D, E, and G on adenosylcobyrinic A,C-diamide. NH(2) groups are provided by glutamine, and one molecule of ATP is hydrogenolyzed for each amidation. This chain is Cobyric acid synthase, found in Vibrio vulnificus (strain YJ016).